Here is a 405-residue protein sequence, read N- to C-terminus: MKRPIYLDYAATTPVDPQVAERMMECLTFDGTFGNAASRSHAYGWQAEEKVEYAREQVANLIKADPREIVWTSGATESDNLALKGVAQFYASKGKHIITSKIEHKAVLDPCRELEEQGFEITYLEPEPQTGLITPEMVKAALRPDTILVSLMMVNNEIGTVTDVAVIGELTRANKTFFHVDAAQAAGKVDIDLSTMKIDLMSFSAHKIYGPKGIGALYVRRSPRVRLKAQIHGGGHERGMRSGTLATHQIVGMGEAFELAGKTMHAEQERIRKLRDKLWNGLQDLEQVFLNGHPTQNVANYLNVSFNFVEGESLMMSLKDAAVSSGSACTSATLEPSYVLRALGLSDELAHSSIRFSFGKYTTEEDIDHVLTITKAAVEKLRELSPLWDMYKEGIDLSTVEWAEH.

Residues 75–76 (AT), N156, Q184, and 204–206 (SAH) each bind pyridoxal 5'-phosphate. K207 is modified (N6-(pyridoxal phosphate)lysine). Pyridoxal 5'-phosphate is bound at residue T244. C329 functions as the Cysteine persulfide intermediate in the catalytic mechanism. Residue C329 participates in [2Fe-2S] cluster binding.

Belongs to the class-V pyridoxal-phosphate-dependent aminotransferase family. NifS/IscS subfamily. Homodimer. Forms a heterotetramer with IscU, interacts with other sulfur acceptors. Pyridoxal 5'-phosphate serves as cofactor.

It localises to the cytoplasm. It catalyses the reaction (sulfur carrier)-H + L-cysteine = (sulfur carrier)-SH + L-alanine. The protein operates within cofactor biosynthesis; iron-sulfur cluster biosynthesis. Functionally, master enzyme that delivers sulfur to a number of partners involved in Fe-S cluster assembly, tRNA modification or cofactor biosynthesis. Catalyzes the removal of elemental sulfur atoms from cysteine to produce alanine. Functions as a sulfur delivery protein for Fe-S cluster synthesis onto IscU, an Fe-S scaffold assembly protein, as well as other S acceptor proteins. The sequence is that of Cysteine desulfurase IscS from Acinetobacter baumannii (strain SDF).